We begin with the raw amino-acid sequence, 322 residues long: Transaldolase (322 aa).

Lysine 132 serves as the catalytic Schiff-base intermediate with substrate.

Belongs to the transaldolase family. Type 1 subfamily. Homodimer.

The protein resides in the cytoplasm. It catalyses the reaction D-sedoheptulose 7-phosphate + D-glyceraldehyde 3-phosphate = D-erythrose 4-phosphate + beta-D-fructose 6-phosphate. It participates in carbohydrate degradation; pentose phosphate pathway; D-glyceraldehyde 3-phosphate and beta-D-fructose 6-phosphate from D-ribose 5-phosphate and D-xylulose 5-phosphate (non-oxidative stage): step 2/3. Functionally, transaldolase is important for the balance of metabolites in the pentose-phosphate pathway. In Protochlamydia amoebophila (strain UWE25), this protein is Transaldolase.